Here is a 302-residue protein sequence, read N- to C-terminus: Ornithine carbamoyltransferase (302 aa).

Carbamoyl phosphate is bound by residues Ser52–Thr55, Gln79, Arg103, and His130–Gln133. Residues Asn161, Asp222, and Ser226–Met227 each bind L-ornithine. Carbamoyl phosphate-binding positions include Cys262–Leu263 and Arg290.

The protein belongs to the aspartate/ornithine carbamoyltransferase superfamily. OTCase family.

It is found in the cytoplasm. The catalysed reaction is carbamoyl phosphate + L-ornithine = L-citrulline + phosphate + H(+). It participates in amino-acid biosynthesis; L-arginine biosynthesis; L-arginine from L-ornithine and carbamoyl phosphate: step 1/3. Its function is as follows. Reversibly catalyzes the transfer of the carbamoyl group from carbamoyl phosphate (CP) to the N(epsilon) atom of ornithine (ORN) to produce L-citrulline. The protein is Ornithine carbamoyltransferase of Syntrophus aciditrophicus (strain SB).